The sequence spans 190 residues: Cytoglobin (190 aa).

One can recognise a Globin domain in the interval 18–167; sequence ELSEAERKAV…IYSHVTAAYK (150 aa). Residues Cys-38 and Cys-83 are joined by a disulfide bond. His-81 and His-113 together coordinate heme b.

The protein belongs to the globin family. As to quaternary structure, monomeric. Homodimer; disulfide-linked in vitro. Also homooligomeric in vitro. Post-translationally, the formation of an intramolecular disulfide bond between cysteines Cys-38 and Cys-83 specifically enhances the nitrite reductase activity. As to expression, widely expressed. Highest expression in heart, stomach, bladder and small intestine.

The protein resides in the cytoplasm. It localises to the nucleus. It carries out the reaction Fe(II)-heme b-[protein] + nitric oxide + O2 = Fe(III)-heme b-[protein] + nitrate. The enzyme catalyses Fe(III)-heme b-[protein] + nitric oxide + H2O = Fe(II)-heme b-[protein] + nitrite + 2 H(+). The catalysed reaction is 2 superoxide + 2 H(+) = H2O2 + O2. It catalyses the reaction H2O2 + AH2 = A + 2 H2O. Its activity is regulated as follows. The nitric oxide dioxygenase activity is activated by a reducing system composed of cytochrome b5, its upstream reductase CYB5R3 and NADH. Probable multifunctional globin with a hexacoordinated heme iron required for the catalysis of various reactions depending on redox condition of the cell as well as oxygen availability. Has a nitric oxide dioxygenase (NOD) activity and is most probably involved in cell-mediated and oxygen-dependent nitric oxide consumption. By scavenging this second messenger may regulate several biological processes including endothelium-mediated vasodilation and vascular tone. Under normoxic conditions functions as a nitric oxide dioxygenase (NOD) but under hypoxic conditions the globin may switch its function to that of a nitrite (NO2) reductase (NiR), generating nitric oxide. Could also have peroxidase and superoxide dismutase activities, detoxifying reactive oxygen species and protecting cells against oxidative stress. Also binds dioxygen with low affinity and could function as an oxygen sensor but has probably no function as a respiratory oxygen carrier. The polypeptide is Cytoglobin (Homo sapiens (Human)).